The primary structure comprises 550 residues: Selinene synthase (550 aa).

D314, D318, D450, and E458 together coordinate Mg(2+). A DDXXD motif motif is present at residues 314-318 (DDIYD).

Belongs to the terpene synthase family. The cofactor is Mg(2+). It depends on Mn(2+) as a cofactor.

The catalysed reaction is (2E,6E)-farnesyl diphosphate = (+)-beta-selinene + diphosphate. It carries out the reaction (2E,6E)-farnesyl diphosphate = alpha-selinene + diphosphate. It functions in the pathway secondary metabolite biosynthesis; terpenoid biosynthesis. Its function is as follows. Sesquiterpene synthase that catalyzes the formation of alpha- and beta-selinene from trans,trans-farnesyl diphosphate (FPP). Also produces some nerolidol. This Ocimum basilicum (Sweet basil) protein is Selinene synthase (SES).